We begin with the raw amino-acid sequence, 121 residues long: Small ribosomal subunit protein uS13 (121 aa).

The segment at 92–121 (RRGLPVRGQNSKNNARTRKGPKRTVANKKK) is disordered. Positions 106–121 (ARTRKGPKRTVANKKK) are enriched in basic residues.

It belongs to the universal ribosomal protein uS13 family. As to quaternary structure, part of the 30S ribosomal subunit. Forms a loose heterodimer with protein S19. Forms two bridges to the 50S subunit in the 70S ribosome.

Its function is as follows. Located at the top of the head of the 30S subunit, it contacts several helices of the 16S rRNA. In the 70S ribosome it contacts the 23S rRNA (bridge B1a) and protein L5 of the 50S subunit (bridge B1b), connecting the 2 subunits; these bridges are implicated in subunit movement. Contacts the tRNAs in the A and P-sites. This is Small ribosomal subunit protein uS13 from Shouchella clausii (strain KSM-K16) (Alkalihalobacillus clausii).